Here is a 496-residue protein sequence, read N- to C-terminus: Inosine-5'-monophosphate dehydrogenase (496 aa).

CBS domains are found at residues 96–152 (VIKD…TKKV) and 156–212 (MTKD…PQAA). Residues aspartate 247 and 299–301 (GIG) each bind NAD(+). The K(+) site is built by glycine 301 and glycine 303. Serine 304 lines the IMP pocket. A K(+)-binding site is contributed by cysteine 306. Cysteine 306 serves as the catalytic Thioimidate intermediate. IMP is bound by residues 339 to 341 (DGG), 362 to 363 (GS), and 386 to 390 (YRGMG). Arginine 405 functions as the Proton acceptor in the catalytic mechanism. Glutamate 423 provides a ligand contact to IMP. K(+)-binding residues include glutamate 477, serine 478, and histidine 479.

Belongs to the IMPDH/GMPR family. In terms of assembly, homotetramer. The cofactor is K(+).

The catalysed reaction is IMP + NAD(+) + H2O = XMP + NADH + H(+). It participates in purine metabolism; XMP biosynthesis via de novo pathway; XMP from IMP: step 1/1. Mycophenolic acid (MPA) is a non-competitive inhibitor that prevents formation of the closed enzyme conformation by binding to the same site as the amobile flap. In contrast, mizoribine monophosphate (MZP) is a competitive inhibitor that induces the closed conformation. MPA is a potent inhibitor of mammalian IMPDHs but a poor inhibitor of the bacterial enzymes. MZP is a more potent inhibitor of bacterial IMPDH. Catalyzes the conversion of inosine 5'-phosphate (IMP) to xanthosine 5'-phosphate (XMP), the first committed and rate-limiting step in the de novo synthesis of guanine nucleotides, and therefore plays an important role in the regulation of cell growth. The protein is Inosine-5'-monophosphate dehydrogenase of Methanocaldococcus jannaschii (strain ATCC 43067 / DSM 2661 / JAL-1 / JCM 10045 / NBRC 100440) (Methanococcus jannaschii).